A 560-amino-acid chain; its full sequence is uncharacterized protein (560 aa).

Topologically, residues 1-17 (MEPKRKSGSLAKHDLPQ) are cytoplasmic. A helical membrane pass occupies residues 18–38 (FYLLIMLYLAQGIPVGLAFGT). Residues 39-54 (VPFLLKSLAKETSFTS) are Extracellular-facing. A helical membrane pass occupies residues 55-75 (LGIFSMATYPYSLKIIWSPIV). Over 76–88 (DSLYNKRIGRRRS) the chain is Cytoplasmic. Residues 89–109 (WIIPVQFVSGFVLWALGWCIS) traverse the membrane as a helical segment. At 110 to 139 (QGIIFDGVDDAFHNRGNGTLHSVSIKNLTW) the chain is on the extracellular side. Residues 140–160 (WFGLLVFLCATQDIAVDGWAL) form a helical membrane-spanning segment. Over 161 to 172 (TILSKESLSYAS) the chain is Cytoplasmic. The chain crosses the membrane as a helical span at residues 173–193 (TAQTIGLNIGYFMSFTIFLSL). Residues 194 to 214 (NSSDFANKYFRNIPLDHGFIS) lie on the Extracellular side of the membrane. A helical transmembrane segment spans residues 215-235 (LGGYMKFSGMLYIVITIYIIF). The Cytoplasmic portion of the chain corresponds to 236 to 329 (CTKEKPYVEY…KLLEQGFKRE (94 aa)). The helical transmembrane segment at 330–350 (DLAVTVLIDLPFEIIFGYYVV) threads the bilayer. Topologically, residues 351–374 (KWSSDKDPMIRDNRRLRNSTGTNK) are extracellular. A helical transmembrane segment spans residues 375–395 (VIKFLVGDAGVLTPWLWGFLG). The Cytoplasmic portion of the chain corresponds to 396–421 (RLAAAVLGSYVVKQFPKDGEISTGYF). A helical membrane pass occupies residues 422–442 (CLVIFQHLLGSFMNTVQFIGI). The Extracellular segment spans residues 443–521 (SAFHTRVADP…LNGTVTILRD (79 aa)). A helical transmembrane segment spans residues 522–542 (GYYITNLICIVVGLFLYFGYL). The Cytoplasmic segment spans residues 543–560 (KRKILHLQSLPISSWRCT).

The protein localises to the membrane. This is an uncharacterized protein from Saccharomyces cerevisiae (strain ATCC 204508 / S288c) (Baker's yeast).